A 66-amino-acid chain; its full sequence is Putative alpha-neurotoxin RjAa16 (66 aa).

An LCN-type CS-alpha/beta domain is found at 1-60 (KEGYPVDWGNCKYECMSDAYCKDLCVDRKAKSGYCYKLNWFCYCEGLPDDSPIKTNGHCR). Disulfide bonds link Cys11-Cys59, Cys15-Cys35, Cys21-Cys42, and Cys25-Cys44.

It belongs to the long (4 C-C) scorpion toxin superfamily. Sodium channel inhibitor family. Alpha subfamily. Expressed by the venom gland.

It is found in the secreted. In terms of biological role, alpha toxins bind voltage-independently at site-3 of sodium channels (Nav) and inhibits the inactivation of the activated channels, thereby blocking neuronal transmission. This chain is Putative alpha-neurotoxin RjAa16, found in Rhopalurus junceus (Caribbean blue scorpion).